The chain runs to 219 residues: Large ribosomal subunit protein bL25 (219 aa).

Positions 194 to 219 are disordered; that stretch reads SSTELEETPEVPASAVPTTDQGESAE. Polar residues predominate over residues 209-219; sequence VPTTDQGESAE.

It belongs to the bacterial ribosomal protein bL25 family. CTC subfamily. As to quaternary structure, part of the 50S ribosomal subunit; part of the 5S rRNA/L5/L18/L25 subcomplex. Contacts the 5S rRNA. Binds to the 5S rRNA independently of L5 and L18.

This is one of the proteins that binds to the 5S RNA in the ribosome where it forms part of the central protuberance. The polypeptide is Large ribosomal subunit protein bL25 (Legionella pneumophila (strain Paris)).